Consider the following 147-residue polypeptide: MVHWTAEEKQLITGLWGKVNVAECGAEALARLLIVYPWTQRFFASFGNLSSPTAILGNPMVRAHGKKVLTSFGDAVKNLDNIKNTFSQLSELHCDKLHVDPENFRLLGDILIIVLAAHFSKDFTPECQAAWQKLVRVVAHALARKYH.

The region spanning 3-147 (HWTAEEKQLI…VAHALARKYH (145 aa)) is the Globin domain. 2 residues coordinate heme b: histidine 64 and histidine 93.

Belongs to the globin family. Heterotetramer of 2 alpha (or alpha-D) and 2 beta chains. Red blood cells.

Functionally, involved in oxygen transport from the lung to the various peripheral tissues. The beta chain is a component of adult hemoglobin A and D. This is Hemoglobin subunit beta (HBB) from Gallus gallus (Chicken).